Consider the following 429-residue polypeptide: Divergent protein kinase domain 2A (429 aa).

Positions 1-34 (MLRLASLKFGRLFRYAKVLFAASLLVVMLLNTHS) are cleaved as a signal peptide.

The protein belongs to the DIPK family.

The protein localises to the cytoplasmic vesicle. The protein resides in the COPI-coated vesicle. Its subcellular location is the golgi apparatus. It localises to the secreted. Its function is as follows. May play a role in cardiomyocyte proliferation through paracrine signaling and activation of the PPI3K-AKT-CDK7 signaling cascade. The polypeptide is Divergent protein kinase domain 2A (dipk2a) (Xenopus tropicalis (Western clawed frog)).